Here is a 413-residue protein sequence, read N- to C-terminus: Putative adhesin P1-like protein MPN_144 (413 aa).

Composition is skewed to polar residues over residues 1–13 (MGQQGQSGTSAGN), 25–54 (SGDSLTTQDGNATGQQEATNYTNLPPNLTP), and 355–376 (SFGTDHSTQPQSLKTTTPVFGT). Disordered stretches follow at residues 1–60 (MGQQ…DWPN) and 355–413 (SFGT…VSGH). Positions 385–399 (LSGGGAGGGSSGSGQ) are enriched in gly residues.

It belongs to the adhesin P1 family.

The protein is Putative adhesin P1-like protein MPN_144 of Mycoplasma pneumoniae (strain ATCC 29342 / M129 / Subtype 1) (Mycoplasmoides pneumoniae).